Here is a 472-residue protein sequence, read N- to C-terminus: MTVETFKPKQTTTLDIPVKTLEAASTNAVTTGNRIGFVSLGCPKNLVDSERILTQLRIDGYEVTNSYDNADLVIVNTCGFIDAAVEESLDAVREALEENGKVIVTGCLGAKENQIREVHPDVLEITGPHSYEAVLKHVHKYVPKPEHNPFTSLIPQTGVKLTPKHYAYLKISEGCDNRCTFCIIPSLRGDLDSRPAGSILDEAKRLVESGVQEILVVSQDTSAYGKDKGGRTDFWNGMPVKQDITSLARQLGKMGAWVRLHYIYPYPWVDDLIPLMAEGLILPYLDIPMQHASPRILKMMKRPGRVDRQLEAIQRWREICPDLVIRSTFIVGFPGETEEDFQILLDFLKEARLDRVGCFKYSEVDGAVANTIAELISEEVKEDRYHRFMEVQAEISAERLARFVGRTLDILIDDVDEEGAIGRSFADAPEIDGMVFINGETELEPGMLVRARITHSDEHDLWAEVVDADTQD.

The MTTase N-terminal domain maps to 33 to 143 (NRIGFVSLGC…VLKHVHKYVP (111 aa)). Residues Cys-42, Cys-78, Cys-107, Cys-175, Cys-179, and Cys-182 each coordinate [4Fe-4S] cluster. The Radical SAM core domain occupies 161–398 (LTPKHYAYLK…MEVQAEISAE (238 aa)). In terms of domain architecture, TRAM spans 401-467 (ARFVGRTLDI…EHDLWAEVVD (67 aa)).

It belongs to the methylthiotransferase family. RimO subfamily. It depends on [4Fe-4S] cluster as a cofactor.

The protein localises to the cytoplasm. The catalysed reaction is L-aspartate(89)-[ribosomal protein uS12]-hydrogen + (sulfur carrier)-SH + AH2 + 2 S-adenosyl-L-methionine = 3-methylsulfanyl-L-aspartate(89)-[ribosomal protein uS12]-hydrogen + (sulfur carrier)-H + 5'-deoxyadenosine + L-methionine + A + S-adenosyl-L-homocysteine + 2 H(+). Catalyzes the methylthiolation of an aspartic acid residue of ribosomal protein uS12. The chain is Ribosomal protein uS12 methylthiotransferase RimO from Shewanella baltica (strain OS195).